The following is an 89-amino-acid chain: Large ribosomal subunit protein bL27 (89 aa).

The tract at residues 1-21 is disordered; it reads MAHKKAGGSSRNGRDSAGRRL.

The protein belongs to the bacterial ribosomal protein bL27 family.

The chain is Large ribosomal subunit protein bL27 from Erythrobacter litoralis (strain HTCC2594).